The primary structure comprises 473 residues: Vasculin (473 aa).

3 disordered regions span residues 1–25, 44–170, and 186–341; these read MAQHDFAPAWLNFPTPPSSTKSSLN, RRRH…SRTP, and SGFP…HQER. Serine 49 carries the phosphoserine modification. At arginine 87 the chain carries Omega-N-methylarginine. A compositionally biased stretch (polar residues) spans 94-117; the sequence is NSRSRSSIFHSGKSQGLHENSIPD. A compositionally biased stretch (basic and acidic residues) spans 119–133; sequence ETGRKEDKRERRQFE. Composition is skewed to polar residues over residues 193–204 and 248–286; these read NLQSQPVKNGTG and NFNTFKSTAKNISPSTNSVKECNRSNSSSPVDKLNQQPR. Phosphoserine is present on residues serine 274, serine 276, serine 322, and serine 381. Residues 293-329 are compositionally biased toward basic and acidic residues; that stretch reads MRSDKKSEFLKALKRDRVEEEHEDESHAGSEKDDDSF. The segment at 450–473 is disordered; it reads TFKPTIENDDTETSSSDTSDDDDV. The segment covering 456–473 has biased composition (acidic residues); sequence ENDDTETSSSDTSDDDDV.

It belongs to the vasculin family. As to quaternary structure, interacts with GTF2B, GTF2F2, RNA polymerase II and TBP. As to expression, ubiquitously expressed (at protein level).

It is found in the nucleus. Functions as a GC-rich promoter-specific transactivating transcription factor. This is Vasculin (Gpbp1) from Mus musculus (Mouse).